The chain runs to 105 residues: MYAIVEINGQQFKAEAGQKLFVHHIQNAENGATVEFDKVLLVDKDGNVTVGAPTVDGAKVVCQIVSSLVKGDKVLVFHKKRRKGHRKLNGHRQQFTELTITEVVA.

Belongs to the bacterial ribosomal protein bL21 family. In terms of assembly, part of the 50S ribosomal subunit. Contacts protein L20.

Its function is as follows. This protein binds to 23S rRNA in the presence of protein L20. This chain is Large ribosomal subunit protein bL21, found in Bacteroides fragilis (strain YCH46).